Here is a 308-residue protein sequence, read N- to C-terminus: uncharacterized protein (308 aa).

A compositionally biased stretch (polar residues) spans 43 to 55; that stretch reads SQYGTWADQHQNG. Positions 43–289 are disordered; sequence SQYGTWADQH…KEERSEECSP (247 aa). A Phosphoserine modification is found at Ser62. The span at 80–90 shows a compositional bias: polar residues; sequence HLSSYTESTSV. Positions 91-109 are enriched in basic and acidic residues; that stretch reads EQRDSSRDRRSSSVDRSSS. The span at 136-152 shows a compositional bias: polar residues; the sequence is IHQTSVLDSSALKTRVQ. The span at 153-168 shows a compositional bias: basic residues; that stretch reads LSKRSRRRAPISHSLR. Ser166 bears the Phosphoserine mark. 2 stretches are compositionally biased toward basic and acidic residues: residues 175-186 and 193-216; these read SESRSPLEEESH and DSTEEKSPRRDESDEEPPRVERTP. Residues Ser205, Ser259, Ser262, and Ser288 each carry the phosphoserine modification.

This is an uncharacterized protein from Mus musculus (Mouse).